We begin with the raw amino-acid sequence, 321 residues long: Cilia- and flagella-associated protein 161 (321 aa).

The disordered stretch occupies residues 275 to 321 (LSTMLDLPKPPAEDTRALEQEREQVSDPGARSTPDARGCVPQCTLPM). Basic and acidic residues predominate over residues 285 to 299 (PAEDTRALEQEREQV).

As to quaternary structure, microtubule inner protein component of sperm flagellar doublet microtubules. As to expression, expressed in trachea multiciliated cells.

It is found in the cytoplasm. Its subcellular location is the cytoskeleton. The protein localises to the cilium axoneme. It localises to the flagellum axoneme. Functionally, microtubule inner protein (MIP) part of the dynein-decorated doublet microtubules (DMTs) in cilia axoneme, which is required for motile cilia beating. The sequence is that of Cilia- and flagella-associated protein 161 from Bos taurus (Bovine).